Reading from the N-terminus, the 321-residue chain is Methionyl-tRNA formyltransferase (321 aa).

112–115 is a (6S)-5,6,7,8-tetrahydrofolate binding site; it reads GLLP.

Belongs to the Fmt family.

It carries out the reaction L-methionyl-tRNA(fMet) + (6R)-10-formyltetrahydrofolate = N-formyl-L-methionyl-tRNA(fMet) + (6S)-5,6,7,8-tetrahydrofolate + H(+). Its function is as follows. Attaches a formyl group to the free amino group of methionyl-tRNA(fMet). The formyl group appears to play a dual role in the initiator identity of N-formylmethionyl-tRNA by promoting its recognition by IF2 and preventing the misappropriation of this tRNA by the elongation apparatus. The sequence is that of Methionyl-tRNA formyltransferase from Chlamydia caviae (strain ATCC VR-813 / DSM 19441 / 03DC25 / GPIC) (Chlamydophila caviae).